A 975-amino-acid chain; its full sequence is Exocyst complex component 4 (975 aa).

Alanine 2 is subject to N-acetylalanine. Lysine 9 carries the post-translational modification N6-acetyllysine. Serine 32 is subject to Phosphoserine. The stretch at 32 to 114 (STSDDVEDRE…HCKRDELRKL (83 aa)) forms a coiled coil. Over residues 211 to 224 (RNKEKGKMSSHGKD) the composition is skewed to basic and acidic residues. The disordered stretch occupies residues 211–230 (RNKEKGKMSSHGKDPSPGPL). Serine 226 carries the phosphoserine modification. At threonine 238 the chain carries Phosphothreonine. Serine 469 carries the post-translational modification Phosphoserine.

This sequence belongs to the SEC8 family. As to quaternary structure, the exocyst complex is composed of EXOC1, EXOC2, EXOC3, EXOC4, EXOC5, EXOC6, EXOC7 and EXOC8. Interacts with BIRC6/bruce. Interacts with MYRIP. Interacts with SH3BP1; required for the localization of both SH3BP1 and the exocyst to the leading edge of migrating cells. Interacts with SLC6A9. Expressed in the striatum (at protein level).

The protein resides in the midbody. It is found in the midbody ring. The protein localises to the cell projection. Its subcellular location is the cytoplasm. It localises to the cytoskeleton. The protein resides in the microtubule organizing center. It is found in the centrosome. Functionally, component of the exocyst complex involved in the docking of exocytic vesicles with fusion sites on the plasma membrane. This Mus musculus (Mouse) protein is Exocyst complex component 4 (Exoc4).